Here is a 260-residue protein sequence, read N- to C-terminus: Type III pantothenate kinase (260 aa).

6 to 13 contributes to the ATP binding site; it reads DSGNTNIV. 108–111 provides a ligand contact to substrate; it reads GADR. Asp110 functions as the Proton acceptor in the catalytic mechanism. Residue Asp130 participates in K(+) binding. Thr133 lines the ATP pocket. Position 185 (Thr185) interacts with substrate.

The protein belongs to the type III pantothenate kinase family. Homodimer. NH4(+) is required as a cofactor. Requires K(+) as cofactor.

It localises to the cytoplasm. It carries out the reaction (R)-pantothenate + ATP = (R)-4'-phosphopantothenate + ADP + H(+). The protein operates within cofactor biosynthesis; coenzyme A biosynthesis; CoA from (R)-pantothenate: step 1/5. Its function is as follows. Catalyzes the phosphorylation of pantothenate (Pan), the first step in CoA biosynthesis. The polypeptide is Type III pantothenate kinase (Paramagnetospirillum magneticum (strain ATCC 700264 / AMB-1) (Magnetospirillum magneticum)).